A 366-amino-acid polypeptide reads, in one-letter code: Sulfate/thiosulfate import ATP-binding protein CysA 2 (366 aa).

The ABC transporter domain occupies Leu14–Val243. Gly46–Thr53 serves as a coordination point for ATP.

Belongs to the ABC transporter superfamily. Sulfate/tungstate importer (TC 3.A.1.6) family. In terms of assembly, the complex is composed of two ATP-binding proteins (CysA), two transmembrane proteins (CysT and CysW) and a solute-binding protein (CysP).

It localises to the cell inner membrane. The enzyme catalyses sulfate(out) + ATP + H2O = sulfate(in) + ADP + phosphate + H(+). It carries out the reaction thiosulfate(out) + ATP + H2O = thiosulfate(in) + ADP + phosphate + H(+). Functionally, part of the ABC transporter complex CysAWTP involved in sulfate/thiosulfate import. Responsible for energy coupling to the transport system. In Chromobacterium violaceum (strain ATCC 12472 / DSM 30191 / JCM 1249 / CCUG 213 / NBRC 12614 / NCIMB 9131 / NCTC 9757 / MK), this protein is Sulfate/thiosulfate import ATP-binding protein CysA 2.